The sequence spans 411 residues: MNTREVELRGHIIDSLILPRALDIIMDMGGDFQILEIDIGKRKSDPSHARILVEAETPSLLNQILDELGEIGASIAEIKEAELRRAPMDRVLPDDFYSTTNHQTFIYHGGEWVEVEGIEMDCMIVVDPESRTARCKPIREIKKGDLVVVGREGIKVVPPERPRGKQGVFEFMGSEVSSEKPLVTTIKKIASEITEIKKRGGRIGLVGGPAIVHTGSAPVIAEMIRLGFIDVLFAGNALATHDIECALYGTSLGVDIDRGEAVSRGHRHHINAINEINRAGSIRDAVEQGVLTSGIMYECVKNDVPFVLAGSIRDDGPLPDVITDVMEAQNEMRKYVQDLDMVIMIATMLHSIATGNILPSRVKTICVDINPATVTKLSDRGSSQAVSVVTDVGAFIPILLHEIKKMNGLGD.

NAD(+) contacts are provided by N236, A237, D315, T347, M348, L349, H350, D368, D391, and V392.

This sequence belongs to the AgrE/ArgZ ornithine cyclodeaminase family. The cofactor is NAD(+).

It carries out the reaction L-ornithine = L-proline + NH4(+). In terms of biological role, catalyzes the conversion of ornithine to proline, with the release of ammonia. The polypeptide is Ornithine cyclodeaminase (Methanothermobacter thermautotrophicus (strain ATCC 29096 / DSM 1053 / JCM 10044 / NBRC 100330 / Delta H) (Methanobacterium thermoautotrophicum)).